Here is a 220-residue protein sequence, read N- to C-terminus: Large ribosomal subunit protein bL25 (220 aa).

The protein belongs to the bacterial ribosomal protein bL25 family. CTC subfamily. In terms of assembly, part of the 50S ribosomal subunit; part of the 5S rRNA/L5/L18/L25 subcomplex. Contacts the 5S rRNA. Binds to the 5S rRNA independently of L5 and L18.

This is one of the proteins that binds to the 5S RNA in the ribosome where it forms part of the central protuberance. The sequence is that of Large ribosomal subunit protein bL25 from Zymomonas mobilis subsp. mobilis (strain ATCC 31821 / ZM4 / CP4).